Reading from the N-terminus, the 63-residue chain is Small ribosomal subunit protein eS27 (63 aa).

Residues Cys18, Cys21, Cys37, and Cys40 each coordinate Zn(2+). The segment at 18–40 adopts a C4-type zinc-finger fold; sequence CIDCGNEQIVFSHPATKVRCLIC.

This sequence belongs to the eukaryotic ribosomal protein eS27 family. Part of the 30S ribosomal subunit. Zn(2+) serves as cofactor.

The polypeptide is Small ribosomal subunit protein eS27 (Pyrococcus furiosus (strain ATCC 43587 / DSM 3638 / JCM 8422 / Vc1)).